A 677-amino-acid chain; its full sequence is Methionine--tRNA ligase (677 aa).

A 'HIGH' region motif is present at residues Pro-15–His-25. Positions 146, 149, 159, and 162 each coordinate Zn(2+). The 'KMSKS' region motif lies at Lys-333–Ser-337. ATP is bound at residue Lys-336. The tRNA-binding domain occupies Asp-575–Lys-677.

This sequence belongs to the class-I aminoacyl-tRNA synthetase family. MetG type 1 subfamily. As to quaternary structure, homodimer. Requires Zn(2+) as cofactor.

It is found in the cytoplasm. It carries out the reaction tRNA(Met) + L-methionine + ATP = L-methionyl-tRNA(Met) + AMP + diphosphate. In terms of biological role, is required not only for elongation of protein synthesis but also for the initiation of all mRNA translation through initiator tRNA(fMet) aminoacylation. In Salmonella paratyphi C (strain RKS4594), this protein is Methionine--tRNA ligase.